Consider the following 508-residue polypeptide: Photosystem II CP47 reaction center protein (508 aa).

Helical transmembrane passes span 21–36 (SVHI…WAGS), 101–115 (IVFS…IWHW), 140–156 (GIHL…FGAF), 203–218 (IAAG…FHLS), 237–252 (VLSS…AFVV), and 457–472 (SFAL…HGAR).

Belongs to the PsbB/PsbC family. PsbB subfamily. As to quaternary structure, PSII is composed of 1 copy each of membrane proteins PsbA, PsbB, PsbC, PsbD, PsbE, PsbF, PsbH, PsbI, PsbJ, PsbK, PsbL, PsbM, PsbT, PsbX, PsbY, PsbZ, Psb30/Ycf12, at least 3 peripheral proteins of the oxygen-evolving complex and a large number of cofactors. It forms dimeric complexes. Binds multiple chlorophylls. PSII binds additional chlorophylls, carotenoids and specific lipids. is required as a cofactor.

The protein localises to the plastid. It localises to the chloroplast thylakoid membrane. Its function is as follows. One of the components of the core complex of photosystem II (PSII). It binds chlorophyll and helps catalyze the primary light-induced photochemical processes of PSII. PSII is a light-driven water:plastoquinone oxidoreductase, using light energy to abstract electrons from H(2)O, generating O(2) and a proton gradient subsequently used for ATP formation. This Barbarea verna (Land cress) protein is Photosystem II CP47 reaction center protein.